Here is a 1035-residue protein sequence, read N- to C-terminus: Glycine dehydrogenase (decarboxylating), mitochondrial (1035 aa).

The N-terminal 64 residues, 1–64 (MERARKLANR…KSFNTQQARS (64 aa)), are a transit peptide targeting the mitochondrion. Residue Lys771 is modified to N6-(pyridoxal phosphate)lysine.

Belongs to the GcvP family. As to quaternary structure, homodimer. The glycine cleavage system is composed of four proteins: P, T, L and H. Pyridoxal 5'-phosphate is required as a cofactor.

It is found in the mitochondrion. It carries out the reaction N(6)-[(R)-lipoyl]-L-lysyl-[glycine-cleavage complex H protein] + glycine + H(+) = N(6)-[(R)-S(8)-aminomethyldihydrolipoyl]-L-lysyl-[glycine-cleavage complex H protein] + CO2. In terms of biological role, the glycine cleavage system catalyzes the degradation of glycine. The P protein binds the alpha-amino group of glycine through its pyridoxal phosphate cofactor; CO(2) is released and the remaining methylamine moiety is then transferred to the lipoamide cofactor of the H protein. This is Glycine dehydrogenase (decarboxylating), mitochondrial (GDCSP) from Solanum tuberosum (Potato).